We begin with the raw amino-acid sequence, 459 residues long: VGFKAGXKDYKLTXXTPEYETKDTDILAAFRXSPQPGVPPEEAGAAVAAXSSTGTWTTVWTDGXTSLXRYKGRCYGIEPVVGEENXXIXYVXYPLDLFEEGSVTNMFTSIVGNVFGFKALRALRLEDLRIPVAYVKTFQGPPHGIQVERDKLNKYGRPLLGCTIKPKLGLSAXNYGRAVYECLRGGLDFTKDDENVNSQPFMRWRDRFLFCAEAIYKAQAETGEIKGHYLNATAGTCEEMMKRAIFARELGVPIVMHDYLTGGFTANTSLAHYCRDNGLLLHIHRAMHAVIDRQKNHGIHFRVLAKALRMSGGDHIHSGTVVGKLEGERDITLGFVDLLRDDFIEKDRSRGIYFTQDWVSLPGVLPVASGGIHVWHMPALTEIFGDDSVLQFGGGTLGHPWGNAPGAVANRVALEACVQARIEGRDLASEGNEIIREATKWSPELAAACEVWKEIKFEF.

At lysine 4 the chain carries N6,N6,N6-trimethyllysine. Substrate is bound by residues asparagine 113 and threonine 163. Lysine 165 acts as the Proton acceptor in catalysis. Lysine 167 contributes to the substrate binding site. Mg(2+) is bound by residues lysine 191, aspartate 193, and glutamate 194. Lysine 191 is subject to N6-carboxylysine. Histidine 284 (proton acceptor) is an active-site residue. Arginine 285, histidine 317, and serine 369 together coordinate substrate.

It belongs to the RuBisCO large chain family. Type I subfamily. In terms of assembly, heterohexadecamer of 8 large chains and 8 small chains; disulfide-linked. The disulfide link is formed within the large subunit homodimers. It depends on Mg(2+) as a cofactor. The disulfide bond which can form in the large chain dimeric partners within the hexadecamer appears to be associated with oxidative stress and protein turnover.

Its subcellular location is the plastid. The protein localises to the chloroplast. It catalyses the reaction 2 (2R)-3-phosphoglycerate + 2 H(+) = D-ribulose 1,5-bisphosphate + CO2 + H2O. The catalysed reaction is D-ribulose 1,5-bisphosphate + O2 = 2-phosphoglycolate + (2R)-3-phosphoglycerate + 2 H(+). Its function is as follows. RuBisCO catalyzes two reactions: the carboxylation of D-ribulose 1,5-bisphosphate, the primary event in carbon dioxide fixation, as well as the oxidative fragmentation of the pentose substrate in the photorespiration process. Both reactions occur simultaneously and in competition at the same active site. This is Ribulose bisphosphate carboxylase large chain from Apium graveolens (Celery).